The following is a 192-amino-acid chain: UPF0149 protein YgfB (192 aa).

The protein belongs to the UPF0149 family.

The sequence is that of UPF0149 protein YgfB from Salmonella typhi.